A 162-amino-acid polypeptide reads, in one-letter code: NADH-quinone oxidoreductase subunit I (162 aa).

4Fe-4S ferredoxin-type domains lie at 54–83 (RRYE…IESE) and 93–122 (TRYD…ETQI). Residues C63, C66, C69, C73, C102, C105, C108, and C112 each contribute to the [4Fe-4S] cluster site.

This sequence belongs to the complex I 23 kDa subunit family. As to quaternary structure, NDH-1 is composed of 14 different subunits. Subunits NuoA, H, J, K, L, M, N constitute the membrane sector of the complex. [4Fe-4S] cluster serves as cofactor.

It is found in the cell inner membrane. The catalysed reaction is a quinone + NADH + 5 H(+)(in) = a quinol + NAD(+) + 4 H(+)(out). In terms of biological role, NDH-1 shuttles electrons from NADH, via FMN and iron-sulfur (Fe-S) centers, to quinones in the respiratory chain. The immediate electron acceptor for the enzyme in this species is believed to be ubiquinone. Couples the redox reaction to proton translocation (for every two electrons transferred, four hydrogen ions are translocated across the cytoplasmic membrane), and thus conserves the redox energy in a proton gradient. In Burkholderia ambifaria (strain MC40-6), this protein is NADH-quinone oxidoreductase subunit I.